The following is a 396-amino-acid chain: MKGALLTAAMLLGSAQAGVHTMKLKKVPLAEQLESVPIDVQVQHLGQKYTGLRTESHTQAMFKATDAQVSGNHPVPITNFMNAQYFSEITIGTPPQTFKVVLDTGSSNLWVPSSQCGSIACYLHNKYESSESSTYKKNGTSFKIEYGSGSLSGFVSQDRMTIGDITINDQLFAEATSEPGLAFAFGRFDGILGLGYDRIAVNGITPPFYKMVEQKLVDEPVFSFYLADQDGESEVVFGGVNKDRYTGKITTIPLRRKAYWEVDFDAIGYGKDFAELEGHGVILDTGTSLIALPSQLAEMLNAQIGAKKSWNGQFTIDCGKKSSLEDVTFTLAGYNFTLGPEDYILEASGSCLSTFMGMDMPAPVGPLAILGDAFLRKYYSIYDLGADTVGIATAKR.

An N-terminal signal peptide occupies residues 1–17 (MKGALLTAAMLLGSAQA). A propeptide spans 18–70 (GVHTMKLKKVPLAEQLESVPIDVQVQHLGQKYTGLRTESHTQAMFKATDAQVS) (activation peptide). Residues 85–392 (YFSEITIGTP…DLGADTVGIA (308 aa)) form the Peptidase A1 domain. Asp-103 is an active-site residue. An intrachain disulfide couples Cys-116 to Cys-121. A glycan (N-linked (GlcNAc...) asparagine) is linked at Asn-138. The active site involves Asp-284. Cys-318 and Cys-351 are disulfide-bonded. An N-linked (GlcNAc...) asparagine glycan is attached at Asn-335.

The protein belongs to the peptidase A1 family.

The protein localises to the vacuole. In Neurospora crassa (strain ATCC 24698 / 74-OR23-1A / CBS 708.71 / DSM 1257 / FGSC 987), this protein is Vacuolar protease A (pep-4).